The chain runs to 525 residues: Peptide chain release factor 3 (525 aa).

The tr-type G domain maps to N11–A279. Residues S20–T27, D88–H92, and N142–D145 contribute to the GTP site.

This sequence belongs to the TRAFAC class translation factor GTPase superfamily. Classic translation factor GTPase family. PrfC subfamily.

The protein localises to the cytoplasm. Functionally, increases the formation of ribosomal termination complexes and stimulates activities of RF-1 and RF-2. It binds guanine nucleotides and has strong preference for UGA stop codons. It may interact directly with the ribosome. The stimulation of RF-1 and RF-2 is significantly reduced by GTP and GDP, but not by GMP. The polypeptide is Peptide chain release factor 3 (Ligilactobacillus salivarius (strain UCC118) (Lactobacillus salivarius)).